A 313-amino-acid chain; its full sequence is Intracellular endo-alpha-(1-&gt;5)-L-arabinanase (313 aa).

The active-site Proton acceptor is the D27. Substrate is bound by residues D27, G105, 144 to 147, and 164 to 166; these read NAID and SFW. The Proton donor role is filled by E201. H271 serves as a coordination point for Ca(2+).

The protein belongs to the glycosyl hydrolase 43 family. As to quaternary structure, monomer. Ca(2+) is required as a cofactor.

The protein localises to the cytoplasm. The enzyme catalyses Endohydrolysis of (1-&gt;5)-alpha-arabinofuranosidic linkages in (1-&gt;5)-arabinans.. The protein operates within glycan metabolism; L-arabinan degradation. Its function is as follows. Involved in the degradation of arabinan and is a key enzyme in the complete degradation of the plant cell wall. Catalyzes the cleavage of endo alpha-(1-&gt;5)-L-arabinofuranosyl residues in debranched arabinan. The sequence is that of Intracellular endo-alpha-(1-&gt;5)-L-arabinanase (abn-ts) from Geobacillus thermodenitrificans.